Here is a 468-residue protein sequence, read N- to C-terminus: E3 ubiquitin-protein ligase RGLG2 (468 aa).

A disordered region spans residues 1-89 (MGTGNSKENW…PSQSYGSDNK (89 aa)). A lipid anchor (N-myristoyl glycine) is attached at Gly-2. Residues 12–45 (QSSFRSTSASSASPSSSSWASQQSYPQYGAESYN) are compositionally biased toward low complexity. Pro residues predominate over residues 46-65 (YPPPPSYAQPPEYTQPPPPL). Over residues 66–84 (YSTQPYSAPSYSAPPSQSY) the composition is skewed to low complexity. The VWFA domain occupies 122 to 342 (NLIVGIDFTK…KETEFALSAL (221 aa)). The segment at 369–416 (FPLPPPMRGGSSSYNSPKPSRLPSFKPSVPPHPTEGYHVRSSPVPPPT) is disordered. The RING-type zinc-finger motif lies at 425-458 (CPICLSNPKDMAFGCGHQTCCECGPDLQMCPICR).

In terms of assembly, interacts with the heterodimer UBC35/UEV1B, UBC35 alone, PIN1, but not with UCB2, UCB9, UEV1B or UEV1C alone. Interacts with ERF053. In terms of processing, N-myristoylated. In terms of tissue distribution, ubiquitously expressed.

The protein resides in the cell membrane. Its subcellular location is the nucleus. The enzyme catalyses S-ubiquitinyl-[E2 ubiquitin-conjugating enzyme]-L-cysteine + [acceptor protein]-L-lysine = [E2 ubiquitin-conjugating enzyme]-L-cysteine + N(6)-ubiquitinyl-[acceptor protein]-L-lysine.. In terms of biological role, E3 ubiquitin-protein ligase that mediates the formation of 'Lys-63'-linked ubiquitin chains. Regulates apical dominance by acting on the auxin transport proteins abundance. Mediates ubiquitination and subsequent proteasomal degradation of ERF053 in response to drought stress. Acts as a negative regulator of drought stress response. The sequence is that of E3 ubiquitin-protein ligase RGLG2 from Arabidopsis thaliana (Mouse-ear cress).